Consider the following 309-residue polypeptide: Sulfate adenylyltransferase subunit 2 (309 aa).

This sequence belongs to the PAPS reductase family. CysD subfamily. In terms of assembly, heterodimer composed of CysD, the smaller subunit, and CysN.

The catalysed reaction is sulfate + ATP + H(+) = adenosine 5'-phosphosulfate + diphosphate. It participates in sulfur metabolism; hydrogen sulfide biosynthesis; sulfite from sulfate: step 1/3. In terms of biological role, with CysN forms the ATP sulfurylase (ATPS) that catalyzes the adenylation of sulfate producing adenosine 5'-phosphosulfate (APS) and diphosphate, the first enzymatic step in sulfur assimilation pathway. APS synthesis involves the formation of a high-energy phosphoric-sulfuric acid anhydride bond driven by GTP hydrolysis by CysN coupled to ATP hydrolysis by CysD. This is Sulfate adenylyltransferase subunit 2 from Mycobacterium bovis (strain ATCC BAA-935 / AF2122/97).